Here is a 632-residue protein sequence, read N- to C-terminus: Sodium- and chloride-dependent GABA transporter 3 (632 aa).

The tract at residues 1–41 (MTAEKALPLGNGKAAEEARESEAPGGGCSSGGAAPARHPRV) is disordered. Topologically, residues 1 to 58 (MTAEKALPLGNGKAAEEARESEAPGGGCSSGGAAPARHPRVKRDKAVHERGHWNNKVE) are cytoplasmic. Ser-21 is modified (phosphoserine). 3 helical membrane passes run 59-79 (FVLS…FPYL), 87-106 (AFLI…VFFL), and 131-151 (GIGY…IIIL). Residues 152–225 (AWAIFYLSNC…DGIEHIGNLR (74 aa)) are Extracellular-facing. 3 N-linked (GlcNAc...) asparagine glycosylation sites follow: Asn-187, Asn-190, and Asn-198. 9 consecutive transmembrane segments (helical) span residues 226-244 (WELA…FCIW), 253-270 (VVYV…ILLI), 306-323 (IFFS…LGSY), 335-356 (IMLC…FSVL), 389-408 (MPLS…FLGL), 438-456 (LLIL…VMLT), 473-493 (GMCL…VYGS), 514-533 (WCWM…FFLI), and 553-571 (IGWL…WICI). Residues 572 to 632 (TVWKTEGTLP…AAITEKETHF (61 aa)) are Cytoplasmic-facing.

It belongs to the sodium:neurotransmitter symporter (SNF) (TC 2.A.22) family. SLC6A11 subfamily. Widespread distribution in the brain.

It is found in the cell membrane. The enzyme catalyses 4-aminobutanoate(out) + chloride(out) + 2 Na(+)(out) = 4-aminobutanoate(in) + chloride(in) + 2 Na(+)(in). It carries out the reaction taurine(out) + chloride(out) + 2 Na(+)(out) = taurine(in) + chloride(in) + 2 Na(+)(in). It catalyses the reaction beta-alanine(out) + chloride(out) + 2 Na(+)(out) = beta-alanine(in) + chloride(in) + 2 Na(+)(in). The catalysed reaction is hypotaurine(out) + chloride(out) + 2 Na(+)(out) = hypotaurine(in) + chloride(in) + 2 Na(+)(in). GABA transport is inhibited by SNAP-5114. Functionally, mediates sodium- and chloride-dependent transport of gamma-aminobutyric acid (GABA). Can also mediate transport of beta-alanine and to a lower extent that of taurine and hypotaurine. The protein is Sodium- and chloride-dependent GABA transporter 3 (SLC6A11) of Homo sapiens (Human).